Consider the following 1697-residue polypeptide: Neurexin-3a (1697 aa).

The first 23 residues, M1 to G23, serve as a signal peptide directing secretion. The 175-residue stretch at L24–C198 folds into the Laminin G-like 1 domain. Topologically, residues L24–T1622 are extracellular. In terms of domain architecture, EGF-like 1 spans I194–N231. 3 disulfide bridges follow: C198–C209, C203–C218, and C220–C230. Laminin G-like domains are found at residues V258 to C455 and D462 to C654. Positions 304, 321, and 389 each coordinate Ca(2+). 5 disulfide bridges follow: C419/C455, C625/C654, C662/C673, C667/C682, and C684/C694. One can recognise an EGF-like 2 domain in the interval S658–E695. Laminin G-like domains are found at residues I700–C872 and D886–C1061. 4 cysteine pairs are disulfide-bonded: C1033–C1061, C1077–C1088, C1082–C1097, and C1099–C1109. Residues P1073–N1110 enclose the EGF-like 3 domain. In terms of domain architecture, Laminin G-like 6 spans T1114–V1314. Disordered stretches follow at residues T1345 to M1366, L1442 to P1479, and P1520 to H1557. Positions G1446–G1461 are enriched in acidic residues. Over residues G1527–P1547 the composition is skewed to polar residues. Residues G1623–M1643 form a helical membrane-spanning segment. The Cytoplasmic segment spans residues Y1644 to V1697. The segment at N1665–V1697 is disordered.

Belongs to the neurexin family.

It localises to the membrane. Neuronal cell surface protein that may be involved in cell recognition and cell adhesion. This Danio rerio (Zebrafish) protein is Neurexin-3a (nrxn3a).